Reading from the N-terminus, the 621-residue chain is Chaperone protein HscA homolog (621 aa).

Belongs to the heat shock protein 70 family.

Chaperone involved in the maturation of iron-sulfur cluster-containing proteins. Has a low intrinsic ATPase activity which is markedly stimulated by HscB. In Cupriavidus necator (strain ATCC 17699 / DSM 428 / KCTC 22496 / NCIMB 10442 / H16 / Stanier 337) (Ralstonia eutropha), this protein is Chaperone protein HscA homolog.